We begin with the raw amino-acid sequence, 208 residues long: Mediator of RNA polymerase II transcription subunit 18 (208 aa).

At S66 the chain carries Phosphoserine.

The protein belongs to the Mediator complex subunit 18 family. Component of the Mediator complex, which is composed of MED1, MED4, MED6, MED7, MED8, MED9, MED10, MED11, MED12, MED13, MED13L, MED14, MED15, MED16, MED17, MED18, MED19, MED20, MED21, MED22, MED23, MED24, MED25, MED26, MED27, MED29, MED30, MED31, CCNC, CDK8 and CDC2L6/CDK11. The MED12, MED13, CCNC and CDK8 subunits form a distinct module termed the CDK8 module. Mediator containing the CDK8 module is less active than Mediator lacking this module in supporting transcriptional activation. Individual preparations of the Mediator complex lacking one or more distinct subunits have been variously termed ARC, CRSP, DRIP, PC2, SMCC and TRAP.

Its subcellular location is the nucleus. Its function is as follows. Component of the Mediator complex, a coactivator involved in the regulated transcription of nearly all RNA polymerase II-dependent genes. Mediator functions as a bridge to convey information from gene-specific regulatory proteins to the basal RNA polymerase II transcription machinery. Mediator is recruited to promoters by direct interactions with regulatory proteins and serves as a scaffold for the assembly of a functional preinitiation complex with RNA polymerase II and the general transcription factors. The polypeptide is Mediator of RNA polymerase II transcription subunit 18 (Med18) (Mus musculus (Mouse)).